The chain runs to 161 residues: Nucleotide-binding protein NE2248 (161 aa).

Belongs to the YajQ family.

Its function is as follows. Nucleotide-binding protein. This chain is Nucleotide-binding protein NE2248, found in Nitrosomonas europaea (strain ATCC 19718 / CIP 103999 / KCTC 2705 / NBRC 14298).